We begin with the raw amino-acid sequence, 286 residues long: Protein WVD2-like 1 (286 aa).

Residues Glu-31–Asp-101 form a disordered region. The residue at position 32 (Thr-32) is a Phosphothreonine. Residues Val-38 to Leu-47 are compositionally biased toward basic and acidic residues. A coiled-coil region spans residues Ala-131 to Lys-182. The tract at residues Asn-186–Ala-286 is disordered. Over residues Thr-234 to Gln-247 the composition is skewed to polar residues.

It belongs to the TPX2 family.

It localises to the cytoplasm. The protein localises to the cytoskeleton. Microtubule-associated protein (MAP) that regulates the orientation of interphase cortical microtubules. Modulates both rotational polarity and anisotropic cell expansion during organ growth. Promotes clockwise root and etiolated hypocotyls coiling, clockwise leaf curling, but left-handed petiole twisting. The chain is Protein WVD2-like 1 (WDL1) from Arabidopsis thaliana (Mouse-ear cress).